Here is a 283-residue protein sequence, read N- to C-terminus: MRAYLDLCQRIIDQGTWVENERTGKRCLTVINADLEYNVGNNEFPLITTRKSFFKSAIAEFIGYIRGYDSAADFRKLGTKTWDANANLNDAWLNNTHRKGEDDMGRVYGIQGRAWAKPDGGTIDQLKKIVDNLKDGIDDRAEIMTFYNPGEFHMGCLRPCMHTHNFSLLGDTLHLTSFQRSCDVPLGLNFNQVQVFVFLALMAQITGKKAGMAYHKIVNAHIYEDQLPLMKEVQLKREPLALPKLIINPEIKSLEDLETWVTMDDFKVEGYECHEAIKYPFAV.

DUMP is bound at residue arginine 22. Cysteine 160 (nucleophile) is an active-site residue. Residues 180–183, asparagine 191, and 221–223 contribute to the dUMP site; these read RSCD and HIY. Aspartate 183 contacts (6R)-5,10-methylene-5,6,7,8-tetrahydrofolate. Position 282 (alanine 282) interacts with (6R)-5,10-methylene-5,6,7,8-tetrahydrofolate.

This sequence belongs to the thymidylate synthase family. Bacterial-type ThyA subfamily. Homodimer.

The protein resides in the cytoplasm. It carries out the reaction dUMP + (6R)-5,10-methylene-5,6,7,8-tetrahydrofolate = 7,8-dihydrofolate + dTMP. It participates in pyrimidine metabolism; dTTP biosynthesis. Its function is as follows. Catalyzes the reductive methylation of 2'-deoxyuridine-5'-monophosphate (dUMP) to 2'-deoxythymidine-5'-monophosphate (dTMP) while utilizing 5,10-methylenetetrahydrofolate (mTHF) as the methyl donor and reductant in the reaction, yielding dihydrofolate (DHF) as a by-product. This enzymatic reaction provides an intracellular de novo source of dTMP, an essential precursor for DNA biosynthesis. The sequence is that of Thymidylate synthase from Colwellia psychrerythraea (strain 34H / ATCC BAA-681) (Vibrio psychroerythus).